A 324-amino-acid polypeptide reads, in one-letter code: Phospho-N-acetylmuramoyl-pentapeptide-transferase (324 aa).

Transmembrane regions (helical) follow at residues 5 to 25 (VILF…PIFI), 55 to 75 (GGLM…DIFF), 81 to 101 (TYML…DDFI), 122 to 142 (LIAL…VVSI), 147 to 167 (VSLD…VGGS), 176 to 196 (LDGL…VLAW), 203 to 223 (VAIF…FNAH), 227 to 247 (VFMG…IAIL), 250 to 270 (LEIL…SVII), and 302 to 322 (VVVT…YIEV).

This sequence belongs to the glycosyltransferase 4 family. MraY subfamily. Mg(2+) is required as a cofactor.

It localises to the cell membrane. It carries out the reaction UDP-N-acetyl-alpha-D-muramoyl-L-alanyl-gamma-D-glutamyl-meso-2,6-diaminopimeloyl-D-alanyl-D-alanine + di-trans,octa-cis-undecaprenyl phosphate = di-trans,octa-cis-undecaprenyl diphospho-N-acetyl-alpha-D-muramoyl-L-alanyl-D-glutamyl-meso-2,6-diaminopimeloyl-D-alanyl-D-alanine + UMP. It functions in the pathway cell wall biogenesis; peptidoglycan biosynthesis. Functionally, catalyzes the initial step of the lipid cycle reactions in the biosynthesis of the cell wall peptidoglycan: transfers peptidoglycan precursor phospho-MurNAc-pentapeptide from UDP-MurNAc-pentapeptide onto the lipid carrier undecaprenyl phosphate, yielding undecaprenyl-pyrophosphoryl-MurNAc-pentapeptide, known as lipid I. The chain is Phospho-N-acetylmuramoyl-pentapeptide-transferase from Anoxybacillus flavithermus (strain DSM 21510 / WK1).